Reading from the N-terminus, the 87-residue chain is Cell division topological specificity factor (87 aa).

Belongs to the MinE family.

Functionally, prevents the cell division inhibition by proteins MinC and MinD at internal division sites while permitting inhibition at polar sites. This ensures cell division at the proper site by restricting the formation of a division septum at the midpoint of the long axis of the cell. The protein is Cell division topological specificity factor of Roseiflexus castenholzii (strain DSM 13941 / HLO8).